The following is a 130-amino-acid chain: Small ribosomal subunit protein uS11c (130 aa).

The protein belongs to the universal ribosomal protein uS11 family. Part of the 30S ribosomal subunit.

The protein resides in the plastid. It localises to the chloroplast. In Marsilea quadrifolia (European water clover), this protein is Small ribosomal subunit protein uS11c.